The primary structure comprises 57 residues: COP9 signalosome complex subunit 9 (57 aa).

This sequence belongs to the CSN9 family. Component of the CSN complex, probably composed of cops1, cops2, cops3, cops4, cops5, cops6, cops7, cops8 and cops9.

The protein resides in the nucleus. It localises to the cytoplasm. The protein localises to the nucleoplasm. Component of the COP9 signalosome complex (CSN), a complex involved in various cellular and developmental processes. The CSN complex is an essential regulator of the ubiquitin (Ubl) conjugation pathway by mediating the deneddylation of the cullin subunits of SCF-type E3 ligase complexes, leading to decrease the Ubl ligase activity. May play a role in cell proliferation. This is COP9 signalosome complex subunit 9 from Danio rerio (Zebrafish).